Here is a 447-residue protein sequence, read N- to C-terminus: Na(+)-translocating NADH-quinone reductase subunit A (447 aa).

Belongs to the NqrA family. In terms of assembly, composed of six subunits; NqrA, NqrB, NqrC, NqrD, NqrE and NqrF.

The enzyme catalyses a ubiquinone + n Na(+)(in) + NADH + H(+) = a ubiquinol + n Na(+)(out) + NAD(+). Its function is as follows. NQR complex catalyzes the reduction of ubiquinone-1 to ubiquinol by two successive reactions, coupled with the transport of Na(+) ions from the cytoplasm to the periplasm. NqrA to NqrE are probably involved in the second step, the conversion of ubisemiquinone to ubiquinol. The sequence is that of Na(+)-translocating NADH-quinone reductase subunit A from Yersinia pestis bv. Antiqua (strain Angola).